We begin with the raw amino-acid sequence, 367 residues long: Molybdopterin synthase catalytic subunit (367 aa).

Substrate contacts are provided by residues 101 to 102 (HR), Lys-117, and 124 to 126 (KKE).

Belongs to the MoaE family. MOCS2B subfamily. As to quaternary structure, heterotetramer; composed of 2 small (Mocs2A) and 2 large (Mocs2B) subunits.

Its subcellular location is the cytoplasm. It catalyses the reaction 2 [molybdopterin-synthase sulfur-carrier protein]-C-terminal-Gly-aminoethanethioate + cyclic pyranopterin phosphate + H2O = molybdopterin + 2 [molybdopterin-synthase sulfur-carrier protein]-C-terminal Gly-Gly + 2 H(+). Its pathway is cofactor biosynthesis; molybdopterin biosynthesis. Its function is as follows. Catalytic subunit of the molybdopterin synthase complex, a complex that catalyzes the conversion of precursor Z into molybdopterin. Acts by mediating the incorporation of 2 sulfur atoms from thiocarboxylated Mocs2A into precursor Z to generate a dithiolene group. In Drosophila erecta (Fruit fly), this protein is Molybdopterin synthase catalytic subunit.